Consider the following 453-residue polypeptide: Probable exopolygalacturonase B (453 aa).

An N-terminal signal peptide occupies residues 1-16; that stretch reads MKFFALAALFASTVNS. 2 N-linked (GlcNAc...) asparagine glycosylation sites follow: N185 and N225. The Proton donor role is filled by D255. An intrachain disulfide couples C257 to C274. N-linked (GlcNAc...) asparagine glycosylation is found at N263 and N275. H278 is a catalytic residue. 2 PbH1 repeats span residues 295–316 and 327–348; these read IENV…RLKA and INNV…VLDQ. N302, N329, N354, and N366 each carry an N-linked (GlcNAc...) asparagine glycan. One copy of the PbH1 3 repeat lies at 362–405; it reads PSRVNFTNIVFEDIYGTSSGKRGKVVADLTCSPNAVCSGIRLKN. C392 and C398 form a disulfide bridge. N436 carries N-linked (GlcNAc...) asparagine glycosylation.

Belongs to the glycosyl hydrolase 28 family.

It localises to the secreted. It catalyses the reaction [(1-&gt;4)-alpha-D-galacturonosyl](n) + H2O = alpha-D-galacturonate + [(1-&gt;4)-alpha-D-galacturonosyl](n-1). In terms of biological role, specific in hydrolyzing the terminal glycosidic bond of polygalacturonic acid and oligogalacturonates. The protein is Probable exopolygalacturonase B (pgxB) of Aspergillus fumigatus (strain ATCC MYA-4609 / CBS 101355 / FGSC A1100 / Af293) (Neosartorya fumigata).